The primary structure comprises 541 residues: Propionyl-CoA carboxylase beta chain, mitochondrial (541 aa).

A mitochondrion-targeting transit peptide spans 1–28; it reads MAAVIRIRAMAAGTRLRVLNCGLGTTIR. The CoA carboxyltransferase N-terminal domain occupies 34–292; sequence PVSVNERIEN…SNQDPASIRE (259 aa). The tract at residues 34–535 is carboxyltransferase; it reads PVSVNERIEN…SKKVHRPWRK (502 aa). A Phosphoserine modification is found at Ser-73. Position 101 is an N6-acetyllysine; alternate (Lys-101). An N6-succinyllysine; alternate modification is found at Lys-101. Lys-250 carries the post-translational modification N6-succinyllysine. The region spanning 296 to 535 is the CoA carboxyltransferase C-terminal domain; it reads PSDRLVPELD…SKKVHRPWRK (240 aa). The interval 327–360 is acyl-CoA binding; it reads DEREFFEIMPNYAKNIVIGFARMNGRTVGIVGNQ. N6-acetyllysine; alternate occurs at positions 476 and 491. An N6-succinyllysine; alternate mark is found at Lys-476 and Lys-491.

The protein belongs to the AccD/PCCB family. As to quaternary structure, the holoenzyme is a dodecamer composed of 6 PCCA/alpha subunits and 6 PCCB/beta subunits.

The protein localises to the mitochondrion matrix. The catalysed reaction is propanoyl-CoA + hydrogencarbonate + ATP = (S)-methylmalonyl-CoA + ADP + phosphate + H(+). It carries out the reaction butanoyl-CoA + hydrogencarbonate + ATP = (2S)-ethylmalonyl-CoA + ADP + phosphate + H(+). It functions in the pathway metabolic intermediate metabolism; propanoyl-CoA degradation; succinyl-CoA from propanoyl-CoA: step 1/3. In terms of biological role, this is one of the 2 subunits of the biotin-dependent propionyl-CoA carboxylase (PCC), a mitochondrial enzyme involved in the catabolism of odd chain fatty acids, branched-chain amino acids isoleucine, threonine, methionine, and valine and other metabolites. Propionyl-CoA carboxylase catalyzes the carboxylation of propionyl-CoA/propanoyl-CoA to D-methylmalonyl-CoA/(S)-methylmalonyl-CoA. Within the holoenzyme, the alpha subunit catalyzes the ATP-dependent carboxylation of the biotin carried by the biotin carboxyl carrier (BCC) domain, while the beta subunit then transfers the carboxyl group from carboxylated biotin to propionyl-CoA. Propionyl-CoA carboxylase also significantly acts on butyryl-CoA/butanoyl-CoA, which is converted to ethylmalonyl-CoA/(2S)-ethylmalonyl-CoA. Other alternative minor substrates include (2E)-butenoyl-CoA/crotonoyl-CoA. In Rattus norvegicus (Rat), this protein is Propionyl-CoA carboxylase beta chain, mitochondrial.